The primary structure comprises 269 residues: Histone deacetylase HDT1 (269 aa).

A disordered region spans residues 97–269 (PFEEEEDDED…HSKAKHSAGK (173 aa)). Composition is skewed to acidic residues over residues 98–115 (FEEEEDDEDDYDESDEDI) and 153–179 (KDDEDESSDDDDSDMGEDEDDSDDSEE). A compositionally biased stretch (polar residues) spans 228-238 (PSKQASKTPKS). The C2H2-type zinc-finger motif lies at 242–265 (HHCKPCNRSFGSEGALDSHSKAKH).

This sequence belongs to the histone deacetylase HD2 family. As to expression, predominantly expressed in ovaries. Accumulates predominantly in the micropylar region of the ovule's integument.

It is found in the nucleus. The protein resides in the nucleolus. In terms of biological role, mediates the deacetylation of lysine residues on the N-terminal part of the core histones (H2A, H2B, H3 and H4). Histone deacetylation gives a tag for epigenetic repression and plays an important role in transcriptional regulation, cell cycle progression and developmental events. This Solanum chacoense (Chaco potato) protein is Histone deacetylase HDT1 (HDT1).